The chain runs to 181 residues: Ribosome maturation factor RimP (181 aa).

Belongs to the RimP family.

It is found in the cytoplasm. Its function is as follows. Required for maturation of 30S ribosomal subunits. In Mycolicibacterium smegmatis (strain ATCC 700084 / mc(2)155) (Mycobacterium smegmatis), this protein is Ribosome maturation factor RimP.